Here is a 194-residue protein sequence, read N- to C-terminus: Metalloproteinase inhibitor 2 (194 aa).

Cys-1 contacts Zn(2+). 2 involved in metalloproteinase-binding regions span residues Cys-1–Ser-4 and Ser-69–Ala-70. Cystine bridges form between Cys-1-Cys-72, Cys-3-Cys-101, Cys-13-Cys-126, Cys-128-Cys-175, Cys-133-Cys-138, and Cys-146-Cys-167. One can recognise an NTR domain in the interval Cys-1–Cys-126.

This sequence belongs to the protease inhibitor I35 (TIMP) family. As to quaternary structure, interacts (via the C-terminal) with MMP2 (via the C-terminal PEX domain); the interaction inhibits the MMP2 activity. The activity of TIMP2 is dependent on the presence of disulfide bonds.

It is found in the secreted. Functionally, complexes with metalloproteinases (such as collagenases) and irreversibly inactivates them by binding to their catalytic zinc cofactor. In Oryctolagus cuniculus (Rabbit), this protein is Metalloproteinase inhibitor 2 (TIMP2).